The chain runs to 156 residues: ATP synthase subunit b (156 aa).

The helical transmembrane segment at 11 to 31 (LIAFALFVWFCMKFVWPPIIN) threads the bilayer.

This sequence belongs to the ATPase B chain family. F-type ATPases have 2 components, F(1) - the catalytic core - and F(0) - the membrane proton channel. F(1) has five subunits: alpha(3), beta(3), gamma(1), delta(1), epsilon(1). F(0) has three main subunits: a(1), b(2) and c(10-14). The alpha and beta chains form an alternating ring which encloses part of the gamma chain. F(1) is attached to F(0) by a central stalk formed by the gamma and epsilon chains, while a peripheral stalk is formed by the delta and b chains.

The protein resides in the cell inner membrane. In terms of biological role, f(1)F(0) ATP synthase produces ATP from ADP in the presence of a proton or sodium gradient. F-type ATPases consist of two structural domains, F(1) containing the extramembraneous catalytic core and F(0) containing the membrane proton channel, linked together by a central stalk and a peripheral stalk. During catalysis, ATP synthesis in the catalytic domain of F(1) is coupled via a rotary mechanism of the central stalk subunits to proton translocation. Its function is as follows. Component of the F(0) channel, it forms part of the peripheral stalk, linking F(1) to F(0). The chain is ATP synthase subunit b from Haemophilus influenzae (strain 86-028NP).